The primary structure comprises 151 residues: Ubiquitin-conjugating enzyme E2 2 (151 aa).

A UBC core domain is found at 4-150 (AARRRLMRDF…VRETVEKSWE (147 aa)). Cys88 serves as the catalytic Glycyl thioester intermediate.

This sequence belongs to the ubiquitin-conjugating enzyme family.

It localises to the cytoplasm. It is found in the nucleus. The catalysed reaction is S-ubiquitinyl-[E1 ubiquitin-activating enzyme]-L-cysteine + [E2 ubiquitin-conjugating enzyme]-L-cysteine = [E1 ubiquitin-activating enzyme]-L-cysteine + S-ubiquitinyl-[E2 ubiquitin-conjugating enzyme]-L-cysteine.. It functions in the pathway protein modification; protein ubiquitination. Functionally, catalyzes the covalent attachment of ubiquitin to other proteins. Plays a role in transcription regulation by catalyzing the monoubiquitination of histone H2B to form H2BK123ub1. H2BK123ub1 gives a specific tag for epigenetic transcriptional activation and is also a prerequisite for H3K4me and H3K79me formation. Also involved in postreplication repair of UV-damaged DNA, in N-end rule-dependent protein degradation and in sporulation. This Neurospora crassa (strain ATCC 24698 / 74-OR23-1A / CBS 708.71 / DSM 1257 / FGSC 987) protein is Ubiquitin-conjugating enzyme E2 2 (mus-8).